The primary structure comprises 506 residues: MTPVVALVGRPNVGKSTLFNRLTRTRDALVADFPGLTRDRKYGHANIAGYDFIVIDTGGIDGTEEGVEEKMAEQSLLAIEEADVVLFLVDARAGLVPADIGIAQYLRQREKTTVVVANKTDGIDADSHCAEFYQLGLGEVEQIAAAQGRGVTQLIDQVLAPLGEQLNADQAVENEENSANEEADEWDTDFDFENEDDTALLDEALEEETEESIEDKNIKIAIVGRPNVGKSTLTNRILGEERVVVYDMPGTTRDSIYIPMERDGQQYTIIDTAGVRKRGKVNLAVEKFSVIKTLQAIQDANVVLLTIDAREGISDQDLSLLGFILNAGRSLVIVVNKWDGLSQDIKDQVKSELDRRLDFIDFARVHFISALHGSGVGNLFDSVKEAYACATQKTSTSMLTRILRMAADEHQPPLVNGRRVKLKYAHPGGYNPPIIVIHGNQVEKLADSYKRYLSNYFRKSLKIIGSPIRIQFQEGNNPFAGKKNKLTPNQLRKRKRLMKFIKKSKK.

EngA-type G domains follow at residues 3–166 (PVVA…GEQL) and 218–391 (IKIA…ACAT). GTP-binding positions include 9 to 16 (GRPNVGKS), 56 to 60 (DTGGI), 118 to 121 (NKTD), 224 to 231 (GRPNVGKS), 271 to 275 (DTAGV), and 336 to 339 (NKWD). Residues 392-476 (QKTSTSMLTR…PIRIQFQEGN (85 aa)) form the KH-like domain.

This sequence belongs to the TRAFAC class TrmE-Era-EngA-EngB-Septin-like GTPase superfamily. EngA (Der) GTPase family. In terms of assembly, associates with the 50S ribosomal subunit.

Its function is as follows. GTPase that plays an essential role in the late steps of ribosome biogenesis. The protein is GTPase Der of Actinobacillus pleuropneumoniae serotype 5b (strain L20).